The primary structure comprises 334 residues: Beta-glucanase (334 aa).

An N-terminal signal peptide occupies residues 1–27 (MKNRVISLLMASLLLVLSVIVAPFYKA). Residues 28-248 (EAATVVNTPF…YVKYYPNGVP (221 aa)) form the GH16 domain. Glu136 functions as the Nucleophile in the catalytic mechanism. The active-site Proton donor is Glu140. Residues 267-334 (NLPLKGDVNG…RYLIRAIPSL (68 aa)) form the Dockerin domain.

This sequence belongs to the glycosyl hydrolase 16 family. May form part of a multienzyme complex (cellulosome).

The catalysed reaction is Hydrolysis of (1-&gt;4)-beta-D-glucosidic linkages in beta-D-glucans containing (1-&gt;3)- and (1-&gt;4)-bonds.. The protein is Beta-glucanase (licB) of Acetivibrio thermocellus (strain ATCC 27405 / DSM 1237 / JCM 9322 / NBRC 103400 / NCIMB 10682 / NRRL B-4536 / VPI 7372) (Clostridium thermocellum).